The sequence spans 299 residues: MTQALTPTVSNTAQPDPARLLAPIVRQVGQAIGDYRMIEQGDRVMVCLSGGKDSYTLLDVLLHLQKKAPIDFEVVAVNLDQGQPGFPKDVLPRYLTALGVRHDILTEDTYSVVKEKTPEGKTTCSLCSRLRRGILYQHAREIGATKIALGHHREDILETLFMNMFFGARLKAMPPKLQSDDGTNVVIRPLAYVAEADIIRYAQAREFPVIPCNLCGAQPNLQRKVVGDMLEGWEREHPGRLNNILRSLTRVTPSHLLDRELYDFASLSVTPAQGDTGFDAESFPEREFMAGLSELSLLQ.

The PP-loop motif signature appears at 49 to 54 (SGGKDS). [4Fe-4S] cluster-binding residues include Cys-124, Cys-127, and Cys-215.

Belongs to the TtcA family. As to quaternary structure, homodimer. The cofactor is Mg(2+). It depends on [4Fe-4S] cluster as a cofactor.

It is found in the cytoplasm. The enzyme catalyses cytidine(32) in tRNA + S-sulfanyl-L-cysteinyl-[cysteine desulfurase] + AH2 + ATP = 2-thiocytidine(32) in tRNA + L-cysteinyl-[cysteine desulfurase] + A + AMP + diphosphate + H(+). Its pathway is tRNA modification. In terms of biological role, catalyzes the ATP-dependent 2-thiolation of cytidine in position 32 of tRNA, to form 2-thiocytidine (s(2)C32). The sulfur atoms are provided by the cysteine/cysteine desulfurase (IscS) system. The protein is tRNA-cytidine(32) 2-sulfurtransferase of Deinococcus radiodurans (strain ATCC 13939 / DSM 20539 / JCM 16871 / CCUG 27074 / LMG 4051 / NBRC 15346 / NCIMB 9279 / VKM B-1422 / R1).